The following is a 256-amino-acid chain: Triosephosphate isomerase (256 aa).

Residue 9–11 (NWK) participates in substrate binding. Catalysis depends on histidine 97, which acts as the Electrophile. The Proton acceptor role is filled by glutamate 169. Substrate is bound by residues glycine 175, serine 214, and 235–236 (GG).

This sequence belongs to the triosephosphate isomerase family. In terms of assembly, homodimer.

The protein localises to the cytoplasm. It catalyses the reaction D-glyceraldehyde 3-phosphate = dihydroxyacetone phosphate. It participates in carbohydrate biosynthesis; gluconeogenesis. Its pathway is carbohydrate degradation; glycolysis; D-glyceraldehyde 3-phosphate from glycerone phosphate: step 1/1. In terms of biological role, involved in the gluconeogenesis. Catalyzes stereospecifically the conversion of dihydroxyacetone phosphate (DHAP) to D-glyceraldehyde-3-phosphate (G3P). The chain is Triosephosphate isomerase from Aliivibrio salmonicida (strain LFI1238) (Vibrio salmonicida (strain LFI1238)).